We begin with the raw amino-acid sequence, 127 residues long: ATP synthase epsilon chain (127 aa).

Belongs to the ATPase epsilon chain family. In terms of assembly, F-type ATPases have 2 components, CF(1) - the catalytic core - and CF(0) - the membrane proton channel. CF(1) has five subunits: alpha(3), beta(3), gamma(1), delta(1), epsilon(1). CF(0) has three main subunits: a, b and c.

It localises to the cell inner membrane. Functionally, produces ATP from ADP in the presence of a proton gradient across the membrane. This is ATP synthase epsilon chain from Leptospira interrogans serogroup Icterohaemorrhagiae serovar copenhageni (strain Fiocruz L1-130).